A 1355-amino-acid polypeptide reads, in one-letter code: NACHT, LRR and PYD domains-containing protein 1 homolog (1355 aa).

An NACHT domain is found at 257–458 (KTVILCGDSG…SVPLLCWMVC (202 aa)). Residue 263–270 (GDSGRGKS) participates in ATP binding. The ZU5 stretch occupies residues 977–1109 (DSDQWVQVEP…FHAKILQPMF (133 aa)). Residues 977–1252 (DSDQWVQVEP…NKTESDLFQS (276 aa)) enclose the FIIND domain. Positions 1110–1252 (SPKTVLVKLG…NKTESDLFQS (143 aa)) are UPA. The CARD domain occupies 1278–1354 (LIKSVENVDT…NLLNHLPSSD (77 aa)).

Belongs to the NLRP family. Interacts with the C-terminal part of nlrp1 (NACHT, LRR and PYD domains-containing protein 1, C-terminus) in absence of pathogens and other damage-associated signals. In terms of assembly, interacts with the N-terminal part of nlrp1 (NACHT, LRR and PYD domains-containing protein 1, N-terminus) in absence of pathogens and other damage-associated signals. Homomultimer; forms the nlrp1 inflammasome polymeric complex, a filament composed of homopolymers of this form in response to pathogens and other damage-associated signals. The nlrp1 inflammasome polymeric complex associates with pycard/asc. Interacts (via CARD domain) with pycard/asc (via CARD domain); leading to pro-inflammatory caspases (caspa and/or caspb) recruitment. Pro-caspase-a and pro-caspase-b filament formation increases local enzyme concentration, resulting in trans-autocleavage and activation. Active caspa and caspb then processes il1b and il18 precursors, leading to the release of mature cytokines in the extracellular milieu and inflammatory response. In terms of processing, autocatalytically cleaved. Autocatalytic cleavage in FIIND region occurs constitutively, prior to activation signals, and is required for inflammasome activity (IL1B release), possibly by facilitating pro-inflammatory caspases (caspa and/or caspb) binding. Both N- and C-terminal parts remain associated non-covalently. Post-translationally, ubiquitinated in response to pathogen-associated signals, leading to its degradation by the proteasome and subsequent release of the cleaved C-terminal part of the protein (NACHT, LRR and PYD domains-containing protein 1, C-terminus), which polymerizes and forms the nlrp1 inflammasome. In terms of tissue distribution, expressed in adult spleen, head kidney, gill and skin and also in the embryo.

It localises to the cytoplasm. The protein resides in the inflammasome. Nlrp1 inflammasome is activated by pathogens and other damage-associated signals: activation promotes ubiquitination and degradation of the N-terminal part, releasing the cleaved C-terminal part of the protein (NACHT, LRR and PYD domains-containing protein 1, C-terminus), which polymerizes and forms the nlrp1 inflammasome. Its function is as follows. Acts as the sensor component of the nlrp1 inflammasome, which mediates inflammasome activation in response to various pathogen-associated signals, leading to subsequent pyroptosis. Inflammasomes are supramolecular complexes that assemble in the cytosol in response to pathogens and other damage-associated signals and play critical roles in innate immunity and inflammation. Acts as a recognition receptor (PRR): recognizes specific pathogens and other damage-associated signals, and mediates the formation of the inflammasome polymeric complex. In response to pathogen-associated signals, the N-terminal part of nlrp1 is degraded by the proteasome, releasing the cleaved C-terminal part of the protein (NACHT, LRR and PYD domains-containing protein 1, C-terminus), which polymerizes to initiate the formation of the inflammasome complex: the inflammasome recruits and activate pro-inflammatory caspases (caspa and/or caspb), leading to pyroptosis. In terms of biological role, constitutes the precursor of the nlrp1 inflammasome, which mediates autoproteolytic processing within the FIIND domain to generate the N-terminal and C-terminal parts, which are associated non-covalently in absence of pathogens and other damage-associated signals. Regulatory part that prevents formation of the nlrp1 inflammasome: in absence of pathogens and other damage-associated signals, interacts with the C-terminal part of nlrp1 (NACHT, LRR and PYD domains-containing protein 1, C-terminus), preventing activation of the nlrp1 inflammasome. In response to pathogen-associated signals, this part is ubiquitinated and degraded by the proteasome, releasing the cleaved C-terminal part of the protein, which polymerizes and forms the nlrp1 inflammasome. Functionally, constitutes the active part of the nlrp1 inflammasome. In absence of pathogens and other damage-associated signals, interacts with the N-terminal part of nlrp1 (NACHT, LRR and PYD domains-containing protein 1, N-terminus), preventing activation of the nlrp1 inflammasome. In response to pathogen-associated signals, the N-terminal part of nlrp1 is degraded by the proteasome, releasing this form, which polymerizes to form the nlrp1 inflammasome complex: the nlrp1 inflammasome complex then directly recruits and activates pro-inflammatory caspases (caspa and/or caspb) activation, leading to subsequent pyroptosis. The sequence is that of NACHT, LRR and PYD domains-containing protein 1 homolog from Danio rerio (Zebrafish).